A 347-amino-acid polypeptide reads, in one-letter code: UPF0284 protein M1627_0030 (347 aa).

Belongs to the UPF0284 family.

This is UPF0284 protein M1627_0030 from Saccharolobus islandicus (strain M.16.27) (Sulfolobus islandicus).